We begin with the raw amino-acid sequence, 60 residues long: Conotoxin Cl1.1 (60 aa).

The N-terminal stretch at 1-19 (MRCLPVIVILLLLISSAAA) is a signal peptide. A propeptide spanning residues 20-48 (VVEGPLRVNRRLRPRKAPVDMQARDWNWG) is cleaved from the precursor.

This sequence belongs to the conotoxin T superfamily. In terms of processing, contains 2 disulfide bonds. Expressed by the venom duct.

The protein localises to the secreted. The chain is Conotoxin Cl1.1 from Californiconus californicus (California cone).